Here is a 324-residue protein sequence, read N- to C-terminus: Protein SRC2 homolog (324 aa).

Residues methionine 1–lysine 111 form the C2 domain. The Cytoplasmic segment spans residues methionine 1–lysine 279. A disordered region spans residues glycine 141–glycine 281. 2 stretches are compositionally biased toward low complexity: residues tyrosine 166–alanine 175 and proline 246–glycine 269. The span at lysine 270 to lysine 279 shows a compositional bias: basic residues. The chain crosses the membrane as a helical; Signal-anchor span at residues alanine 280 to valine 300. Topologically, residues glycine 301–phenylalanine 324 are lumenal.

As to quaternary structure, interacts with RBOHF (via N-terminus).

The protein resides in the endoplasmic reticulum membrane. It localises to the protein storage vacuole membrane. The protein localises to the cell membrane. Its function is as follows. May act as an activator of the calcium-dependent activation of RBOHF that mediates reactive oxygen species (ROS) production and may play a role in cold responses. The sequence is that of Protein SRC2 homolog from Arabidopsis thaliana (Mouse-ear cress).